The sequence spans 375 residues: Dihydroorotate dehydrogenase (quinone) (375 aa).

Residues 78–82 (AGLDK) and threonine 102 contribute to the FMN site. Lysine 82 is a substrate binding site. 127–131 (NRMGF) is a substrate binding site. FMN-binding residues include asparagine 159 and asparagine 192. Asparagine 192 serves as a coordination point for substrate. Catalysis depends on serine 195, which acts as the Nucleophile. Asparagine 197 provides a ligand contact to substrate. Positions 230 and 258 each coordinate FMN. 259–260 (NT) lines the substrate pocket. FMN contacts are provided by residues glycine 288, glycine 317, and 338-339 (YT).

Belongs to the dihydroorotate dehydrogenase family. Type 2 subfamily. In terms of assembly, monomer. The cofactor is FMN.

It localises to the cell membrane. It catalyses the reaction (S)-dihydroorotate + a quinone = orotate + a quinol. Its pathway is pyrimidine metabolism; UMP biosynthesis via de novo pathway; orotate from (S)-dihydroorotate (quinone route): step 1/1. Its function is as follows. Catalyzes the conversion of dihydroorotate to orotate with quinone as electron acceptor. This Cyanothece sp. (strain PCC 7425 / ATCC 29141) protein is Dihydroorotate dehydrogenase (quinone).